The primary structure comprises 197 residues: MPQDAPAGLAPGFLVAAPALADPNFNGSLVLMAEHHAQGALGFVVNRPGPITVADVLGGLDAGLRERAEGAGRADDPVLVGGPVQPERLWILFRPGPAAPEEGAVALGAGLALGGSRELLEALVRARDPGPYLLLLGYAGWAPLQVEREVGEGAWVPLPLQGDLVFDVPMEKRWETAVRRLGLDPAGFLVGGGGAEA.

Belongs to the UPF0301 (AlgH) family.

The polypeptide is UPF0301 protein A2cp1_4106 (Anaeromyxobacter dehalogenans (strain 2CP-1 / ATCC BAA-258)).